A 984-amino-acid chain; its full sequence is MGPAIHNQLYECGLKTTSQDGFLMDNYETQLFQSLNRFINFINNANQSASNKEQNTKFCKSSSNFLRLKLLTVLRQWCDSSRSNCTLEVRDVLTQWWVTLLNFLNSDTSLQIDTALELSLSIELTSVCLECLSKIMTILIILPFHSSRDMEIYSHHLLLTIHCITNKLILISKNSKKLKRTNSDDKCSINDKKLQYLNKYSSLLRAFIGKLNAYAFFYLPEDFHFDTILLLTVSPQISSSIQTSLFSWKKRQYKFTDDQGQMIRTEAFENKDTKFFKIIVSYIKNDFVLMSFYWHYWYIILQFMKFSDSDVGIKKSTLSCIPGSEILLTHVTTRFLNSDLNKFTRIIKQTPNPRIANENVTESHPNFKSLNSSNALITSERINDYVFSNFKTIKLWECLRSLSGCILKENHPEYLENMLSLHESLLIDYVSTISAYDYIAANVIYNKVLQFIIFQFESLPSLKFIQWRSWYNGLLSMLRTKNVNCQTVSLLCLFNIWKHVTIEDRDEIVKVLLSDFWESLIFENEFPLIRILFMKVLVFKIIPSVQNSSSLRFLPHDRIKQLYEELLVNKEELFEMQKHDSNDIVAHRKNALVFNGNSRLMMIPKKPNTEDHLVYKINHDKNLTTERFPSVSSVANTRPNVILKNGKYAYDILDEMTSKAAFLLAEKKTRLNPKKNHKIMDGYEGGQENEDNDEDSEDSGSHKNKRKEGNSSLSATLNTWLSKFSSTSEDSQKKKEQANELGNDFEYDEDVADFAEILPKQSSSNIEKIFKHGNNSGSMVSYNSSIKLNRRENILIGPPELRFSNEIKEHNSIATIFKLVFIQTNRRVVEKIDLANMKWGTIHGGSKYMKPLPVPKDLVASVAKNESETRNLATLCGNGLDFEIPVPDFNIFGKCMEDEQDVAKIGNQNVEDLKVTGGREVTIWKQIQDMKLRTRIQKICVLIETFNATVREYFEFSNRLEHDGIFIDFEVRKPSSNNSINIKV.

Residues 675–712 (KNHKIMDGYEGGQENEDNDEDSEDSGSHKNKRKEGNSS) are disordered. Positions 687–698 (QENEDNDEDSED) are enriched in acidic residues.

The protein belongs to the UPF0592 family.

This is UPF0592 protein YDL073W from Saccharomyces cerevisiae (strain ATCC 204508 / S288c) (Baker's yeast).